Here is a 557-residue protein sequence, read N- to C-terminus: MEAATEFVVESPDVVYSPETIEAQYEYRTTSVSREGGVLKVHPTSTRFTFRTARQVPRLGVMLVGWGGNNGSTLTAAVLANRLRLSWPTRTGRKEANYYGSLTQAGTVSLGLDAEGKEVFVPFSSLLPMVAPDDLVFDGWDISSLNLAEAMRRAQVLDWGLQEQLWPHMEAMRPRPSVYIPEFIAANQSARADNVIPGTRAQQLEQIRRDIRDFRFSAGLDKVIVLWTANTERFCEVIPGLNDTAENLLRTIQLGLEVSPSTLFAVASILEGCAFLNGSPQNTLVPGALELAWQRRVFVGGDDFKSGQTKVKSVLVDFLIGSGLKTMSIVSYNHLGNNDGQNLSAPPQFRSKEVSKSSVVDDMVHSNPVLYSPGEQPDHCVVIKYVPYVGDSKRALDEYTSELMLGGTNTLVLHNTCEDSLLAAPIMLDLALLTELCQRVSFCTDVDPDPQSFHPVLSLLGFLFKAPLAPPGSPVVNALFRQRSCIENILRACVGLPPQNHMLLEHKMERPGLKRVGPLATTSPVLCKKGSAPTAPNGCTGDANGHSQAEAPQMPTT.

Residues G67, G68, N69, N70, D141, S177, V178, Q188, R191, T228, A229, N230, T231, G278, S279, D303, S306, N337, N338, D339, and K352 each contribute to the NAD(+) site. A Phosphoserine modification is found at S279. Phosphoserine is present on S357. G390, D391, D419, and S420 together coordinate NAD(+). At S523 the chain carries Phosphoserine. The disordered stretch occupies residues 527-557; it reads CKKGSAPTAPNGCTGDANGHSQAEAPQMPTT.

This sequence belongs to the myo-inositol 1-phosphate synthase family. Requires NAD(+) as cofactor. As to expression, expressed in testis (at protein level).

The protein resides in the cytoplasm. The enzyme catalyses D-glucose 6-phosphate = 1D-myo-inositol 3-phosphate. It participates in polyol metabolism; myo-inositol biosynthesis; myo-inositol from D-glucose 6-phosphate: step 1/2. In terms of biological role, key enzyme in myo-inositol biosynthesis pathway that catalyzes the conversion of glucose 6-phosphate to 1-myo-inositol 1-phosphate in a NAD-dependent manner. Rate-limiting enzyme in the synthesis of all inositol-containing compounds. This Bos taurus (Bovine) protein is Inositol-3-phosphate synthase 1 (ISYNA1).